The following is a 500-amino-acid chain: NAD(P)H-quinone oxidoreductase chain 4, chloroplastic (500 aa).

A run of 14 helical transmembrane segments spans residues 4-24 (FPWL…IFFL), 35-55 (YTIA…CYHF), 87-107 (LGSI…AWPV), 111-131 (SQLF…LFSS), 134-154 (LLLF…LLSM), 167-187 (FILY…GMGL), 211-231 (ILLY…IPLH), 242-262 (HYST…YGLI), 272-292 (AHYL…IYAA), 313-333 (MGFI…GAIL), 334-354 (QILS…TACD), 386-406 (LALP…GLIT), 417-437 (LITF…LSML), and 462-482 (LFLL…PDFV).

It belongs to the complex I subunit 4 family.

It localises to the plastid. The protein localises to the chloroplast thylakoid membrane. The catalysed reaction is a plastoquinone + NADH + (n+1) H(+)(in) = a plastoquinol + NAD(+) + n H(+)(out). It catalyses the reaction a plastoquinone + NADPH + (n+1) H(+)(in) = a plastoquinol + NADP(+) + n H(+)(out). This chain is NAD(P)H-quinone oxidoreductase chain 4, chloroplastic, found in Saccharum officinarum (Sugarcane).